Reading from the N-terminus, the 695-residue chain is Protein EARLY FLOWERING 3 (695 aa).

Residues 1–11 (MKRGKDEEKIL) are compositionally biased toward basic and acidic residues. Disordered regions lie at residues 1–33 (MKRG…APPR), 48–75 (RFGD…SQPC), 136–159 (RSQS…VAPS), 216–283 (EKSA…REYS), and 541–653 (CSSQ…QTTR). Over residues 54 to 74 (TMNSRSNNTSTLVHPGPSSQP) the composition is skewed to polar residues. Basic and acidic residues-rich tracts occupy residues 216–226 (EKSASSHDRVN), 234–253 (QESR…KDTD), and 260–283 (LATE…REYS). Residues 261-484 (ATENHSQEGH…VMSPSEGLIY (224 aa)) are interaction with ELF3. Polar residues-rich tracts occupy residues 551-567 (PNEQ…LQNT) and 579-588 (APQQQQQPTK). Composition is skewed to low complexity over residues 598–616 (QGST…GSKS) and 636–653 (TMTT…QTTR).

As to quaternary structure, interacts specifically with both Pr and Pfr forms of phytochrome B. Interacts with ELF4. May form a homodimer.

The protein localises to the nucleus. In terms of biological role, may be a transcription factor part of a circadian clock input pathway. Acts within a 'zeitnehmer' feedback loop and is involved in its own circadian regulation. Has no role in regulating circadian clock function in the dark. Part of a corepressor complex consisting of ELF4, ELF3, and LUX involved in the transcriptional regulation of APRR9. The activity of the protein may be decreased in long day conditions due to its interaction with phytochrome B (phyB). Can regulate the initiation of flowering independently of phyB. Also involved in responses to nematode parasitism, like the formation of the nematode feeding structure. The protein is Protein EARLY FLOWERING 3 (ELF3) of Arabidopsis thaliana (Mouse-ear cress).